Reading from the N-terminus, the 972-residue chain is Protein NRDE2 homolog (972 aa).

The span at 1-17 (MPSNHNTSVPKFSSFNS) shows a compositional bias: polar residues. The tract at residues 1-61 (MPSNHNTSVP…RSIQSNFAVD (61 aa)) is disordered. Basic residues predominate over residues 19 to 33 (KAKKNPITKSNKKYR). A compositionally biased stretch (polar residues) spans 37 to 59 (DQVSSNHAKSSFPSHRSIQSNFA). HAT repeat units lie at residues 159–191 (LNIL…YQER), 250–282 (WSKE…YFTG), 318–350 (TDVT…YELA), 355–386 (QANM…FWNS), 608–640 (EEKP…LEHL), 788–820 (YNLP…FESK), and 860–894 (TNSQ…ILNL). A Phosphoserine modification is found at Ser-970.

The protein belongs to the NRDE2 family.

The protein resides in the nucleus. The chain is Protein NRDE2 homolog from Schizosaccharomyces pombe (strain 972 / ATCC 24843) (Fission yeast).